Here is a 301-residue protein sequence, read N- to C-terminus: Phosphate butyryltransferase (301 aa).

The protein belongs to the phosphate acetyltransferase and butyryltransferase family.

It catalyses the reaction butanoyl-CoA + phosphate = butanoyl phosphate + CoA. It functions in the pathway lipid metabolism; butanoate metabolism. Catalyzes the conversion of butyryl-CoA through butyryl phosphate to butyrate. The chain is Phosphate butyryltransferase (ptb) from Clostridium acetobutylicum (strain ATCC 824 / DSM 792 / JCM 1419 / IAM 19013 / LMG 5710 / NBRC 13948 / NRRL B-527 / VKM B-1787 / 2291 / W).